Here is a 387-residue protein sequence, read N- to C-terminus: Oleoyl-12-hydroxylase FAH12 (387 aa).

Residues 1 to 34 form a disordered region; it reads MGGGGRMSTVITSNNSEKKGGSSHLKRAPHTKPP. The next 2 helical transmembrane spans lie at 61 to 81 and 88 to 108; these read AYDV…FPYI and VAWL…WVIG. The Histidine box-1 signature appears at 109–113; the sequence is HECGH. The chain crosses the membrane as a helical span at residues 121-141; the sequence is LADDIVGLIVHSALLVPYFSW. Positions 145–149 match the Histidine box-2 motif; that stretch reads HRRHH. A run of 3 helical transmembrane segments spans residues 183 to 203, 229 to 249, and 253 to 273; these read VLTL…FNVS, IYIA…ATMA, and AWVM…LVMI. The Histidine box-3 motif lies at 319 to 323; it reads HVAHH.

It belongs to the fatty acid desaturase type 1 family. In terms of tissue distribution, expressed in seeds. Barely detected in leaves.

The protein localises to the microsome membrane. The enzyme catalyses a 1-acyl-2-(9Z)-octadecenoyl-sn-glycero-3-phosphocholine + 2 Fe(II)-[cytochrome b5] + O2 + 2 H(+) = a 1-acyl-2-[(R)-12-hydroxyoleoyl]-sn-glycero-3-phosphocholine + 2 Fe(III)-[cytochrome b5] + H2O. It participates in lipid metabolism; monounsaturated fatty acid biosynthesis. Inhibited by oleoyloxyethyl phosphocholine. Its function is as follows. Oleoyl-12-hydroxylase involved in the biosynthesis of ricinoleate (12-hydroxy-cis-9-octadecenoate), the major fatty acid constituent of the oil seeds from castor bean plants. Catalyzes the hydroxylation at the 12-position of 1-acyl-2-oleoyl-sn-glycero-3-phosphocholine (2-oleoyl-PC), which seems to be the actual physiological subtrate. It uses cytochrome b5 as an electron donor. May also be involved in the production of lesquerolic acid (14-hydroxyeicos-cis-ll-enoic acid) in vitro. This is Oleoyl-12-hydroxylase FAH12 from Ricinus communis (Castor bean).